We begin with the raw amino-acid sequence, 289 residues long: Ribosomal protein L11 methyltransferase (289 aa).

4 residues coordinate S-adenosyl-L-methionine: T135, G156, D179, and N225.

This sequence belongs to the methyltransferase superfamily. PrmA family.

Its subcellular location is the cytoplasm. It carries out the reaction L-lysyl-[protein] + 3 S-adenosyl-L-methionine = N(6),N(6),N(6)-trimethyl-L-lysyl-[protein] + 3 S-adenosyl-L-homocysteine + 3 H(+). Functionally, methylates ribosomal protein L11. This is Ribosomal protein L11 methyltransferase from Chlorobaculum parvum (strain DSM 263 / NCIMB 8327) (Chlorobium vibrioforme subsp. thiosulfatophilum).